The sequence spans 450 residues: F-box/FBD/LRR-repeat protein At5g22660 (450 aa).

Positions 12–58 constitute an F-box domain; sequence EDRISSLPDHLLSQILSNLPTENAVTTSILSTRWKDLWLSTPVLDID. 2 LRR repeats span residues 157–181 and 294–317; these read LPNL…KFIS and LSSL…LKHE. The region spanning 364–416 is the FBD domain; sequence EEISLSSSVPKCLQSSLENVEIIRPNYGSGEEMKLSKYFLENSLVLKKFKLCR.

The polypeptide is F-box/FBD/LRR-repeat protein At5g22660 (Arabidopsis thaliana (Mouse-ear cress)).